Consider the following 419-residue polypeptide: UDP-N-acetylglucosamine 1-carboxyvinyltransferase 2 (419 aa).

22–23 serves as a coordination point for phosphoenolpyruvate; sequence KN. Arginine 92 is a UDP-N-acetyl-alpha-D-glucosamine binding site. The Proton donor role is filled by aspartate 116. UDP-N-acetyl-alpha-D-glucosamine contacts are provided by residues 121–125, aspartate 306, and leucine 328; that span reads RPIDQ.

This sequence belongs to the EPSP synthase family. MurA subfamily.

It localises to the cytoplasm. It carries out the reaction phosphoenolpyruvate + UDP-N-acetyl-alpha-D-glucosamine = UDP-N-acetyl-3-O-(1-carboxyvinyl)-alpha-D-glucosamine + phosphate. It participates in cell wall biogenesis; peptidoglycan biosynthesis. Cell wall formation. Adds enolpyruvyl to UDP-N-acetylglucosamine. This chain is UDP-N-acetylglucosamine 1-carboxyvinyltransferase 2, found in Latilactobacillus sakei subsp. sakei (strain 23K) (Lactobacillus sakei subsp. sakei).